The primary structure comprises 388 residues: Processive diacylglycerol beta-glucosyltransferase (388 aa).

This sequence belongs to the glycosyltransferase 28 family. UgtP subfamily.

Its subcellular location is the cell membrane. The enzyme catalyses a 1,2-diacyl-3-O-(beta-D-glucopyranosyl)-sn-glycerol + UDP-alpha-D-glucose = a 1,2-diacyl-3-O-(beta-D-Glc-(1-&gt;6)-beta-D-Glc)-sn-glycerol + UDP + H(+). It catalyses the reaction a 1,2-diacyl-3-O-(beta-D-Glc-(1-&gt;6)-beta-D-Glc)-sn-glycerol + UDP-alpha-D-glucose = a 1,2-diacyl-3-O-(beta-D-Glc-(1-&gt;6)-beta-D-Glc-(1-&gt;6)-beta-D-Glc)-sn-glycerol + UDP + H(+). The catalysed reaction is a 1,2-diacyl-sn-glycerol + UDP-alpha-D-glucose = a 1,2-diacyl-3-O-(beta-D-glucopyranosyl)-sn-glycerol + UDP + H(+). It participates in glycolipid metabolism; diglucosyl-diacylglycerol biosynthesis. Processive glucosyltransferase involved in the biosynthesis of both the bilayer- and non-bilayer-forming membrane glucolipids. Is able to successively transfer up to three glucosyl residues to diacylglycerol (DAG), thereby catalyzing the formation of beta-monoglucosyl-DAG (3-O-(beta-D-glucopyranosyl)-1,2-diacyl-sn-glycerol), beta-diglucosyl-DAG (3-O-(beta-D-glucopyranosyl-beta-(1-&gt;6)-D-glucopyranosyl)-1,2-diacyl-sn-glycerol) and beta-triglucosyl-DAG (3-O-(beta-D-glucopyranosyl-beta-(1-&gt;6)-D-glucopyranosyl-beta-(1-&gt;6)-D-glucopyranosyl)-1,2-diacyl-sn-glycerol). Beta-diglucosyl-DAG is the predominant glycolipid found in Bacillales and is also used as a membrane anchor for lipoteichoic acid (LTA). In Bacillus anthracis (strain A0248), this protein is Processive diacylglycerol beta-glucosyltransferase.